Reading from the N-terminus, the 397-residue chain is DNA-directed RNA polymerase subunit Rpo1C (397 aa).

This sequence belongs to the RNA polymerase beta' chain family. In terms of assembly, part of the RNA polymerase complex.

It localises to the cytoplasm. It catalyses the reaction RNA(n) + a ribonucleoside 5'-triphosphate = RNA(n+1) + diphosphate. Functionally, DNA-dependent RNA polymerase (RNAP) catalyzes the transcription of DNA into RNA using the four ribonucleoside triphosphates as substrates. Forms part of the jaw domain. This chain is DNA-directed RNA polymerase subunit Rpo1C, found in Pyrococcus abyssi (strain GE5 / Orsay).